Reading from the N-terminus, the 877-residue chain is Phosphoenolpyruvate carboxylase (877 aa).

Residues His138 and Lys544 contribute to the active site.

Belongs to the PEPCase type 1 family. Mg(2+) serves as cofactor.

It carries out the reaction oxaloacetate + phosphate = phosphoenolpyruvate + hydrogencarbonate. Forms oxaloacetate, a four-carbon dicarboxylic acid source for the tricarboxylic acid cycle. This chain is Phosphoenolpyruvate carboxylase, found in Vibrio vulnificus (strain CMCP6).